We begin with the raw amino-acid sequence, 79 residues long: D-alanyl carrier protein (79 aa).

Positions 1–77 (MDIKSEVLAI…KIVAGVTELC (77 aa)) constitute a Carrier domain. Position 35 is an O-(pantetheine 4'-phosphoryl)serine (S35).

This sequence belongs to the DltC family. Post-translationally, 4'-phosphopantetheine is transferred from CoA to a specific serine of apo-DCP.

It localises to the cytoplasm. The protein operates within cell wall biogenesis; lipoteichoic acid biosynthesis. Its function is as follows. Carrier protein involved in the D-alanylation of lipoteichoic acid (LTA). The loading of thioester-linked D-alanine onto DltC is catalyzed by D-alanine--D-alanyl carrier protein ligase DltA. The DltC-carried D-alanyl group is further transferred to cell membrane phosphatidylglycerol (PG) by forming an ester bond, probably catalyzed by DltD. D-alanylation of LTA plays an important role in modulating the properties of the cell wall in Gram-positive bacteria, influencing the net charge of the cell wall. The polypeptide is D-alanyl carrier protein (Streptococcus agalactiae serotype Ia (strain ATCC 27591 / A909 / CDC SS700)).